The following is a 128-amino-acid chain: Fluoride-specific ion channel FluC (128 aa).

4 helical membrane passes run 4–24 (LLLA…RYLI), 39–59 (GTLI…EFSM), 71–91 (FLTT…YETI), and 99–119 (MTLG…FVVI). Na(+) contacts are provided by glycine 78 and threonine 81.

This sequence belongs to the fluoride channel Fluc/FEX (TC 1.A.43) family.

It localises to the cell membrane. It catalyses the reaction fluoride(in) = fluoride(out). Na(+) is not transported, but it plays an essential structural role and its presence is essential for fluoride channel function. Fluoride-specific ion channel. Important for reducing fluoride concentration in the cell, thus reducing its toxicity. In Clostridium perfringens (strain 13 / Type A), this protein is Fluoride-specific ion channel FluC.